A 450-amino-acid chain; its full sequence is Flavin-containing monooxygenase FMO GS-OX-like 3 (450 aa).

FAD is bound at residue 17–22 (GAGPAG). 215-220 (GNSSSA) provides a ligand contact to NADP(+).

The protein belongs to the FMO family. FAD serves as cofactor.

In terms of biological role, catalyzes the conversion of methylthioalkyl glucosinolates of any chain length into methylsulfinylalkyl glucosinolates. The polypeptide is Flavin-containing monooxygenase FMO GS-OX-like 3 (Arabidopsis thaliana (Mouse-ear cress)).